The chain runs to 237 residues: Ribonuclease PH (237 aa).

Residues Arg86 and 124-126 each bind phosphate; that span reads GTR.

The protein belongs to the RNase PH family. Homohexameric ring arranged as a trimer of dimers.

The catalysed reaction is tRNA(n+1) + phosphate = tRNA(n) + a ribonucleoside 5'-diphosphate. Phosphorolytic 3'-5' exoribonuclease that plays an important role in tRNA 3'-end maturation. Removes nucleotide residues following the 3'-CCA terminus of tRNAs; can also add nucleotides to the ends of RNA molecules by using nucleoside diphosphates as substrates, but this may not be physiologically important. Probably plays a role in initiation of 16S rRNA degradation (leading to ribosome degradation) during starvation. The protein is Ribonuclease PH of Bradyrhizobium sp. (strain ORS 278).